The sequence spans 349 residues: Aldehyde reductase YahK (349 aa).

The Zn(2+) site is built by cysteine 40, histidine 62, cysteine 93, cysteine 96, cysteine 99, cysteine 107, and cysteine 158.

Belongs to the zinc-containing alcohol dehydrogenase family. Zn(2+) serves as cofactor.

It carries out the reaction a primary alcohol + NADP(+) = an aldehyde + NADPH + H(+). Catalyzes the reduction of a wide range of aldehydes into their corresponding alcohols. Has a strong preference for NADPH over NADH as the electron donor. Cannot use a ketone as substrate. Is a major source of NADPH-dependent aldehyde reductase activity in E.coli. The in vivo functions of YahK has yet to be determined. This chain is Aldehyde reductase YahK (yahK), found in Escherichia coli (strain K12).